We begin with the raw amino-acid sequence, 260 residues long: Cytochrome c oxidase subunit 2 (260 aa).

The Mitochondrial intermembrane segment spans residues 1-41 (MIVREWLFFTMAPCDAAEPWQLGFQDAATPMMQGIIDLHHD). Residues 42 to 58 (IFFFLILILVFVSWILV) form a helical membrane-spanning segment. Over 59–82 (RALWHFHYKKNPIPQRIVHGTTIE) the chain is Mitochondrial matrix. Residues 83-104 (IIRTIFPSIILMFIAIPSFALL) traverse the membrane as a helical segment. The Mitochondrial intermembrane segment spans residues 105-260 (YSMDEVVVDP…NQLIPQTGEA (156 aa)). Cu cation is bound by residues His187, Cys222, Glu224, Cys226, His230, and Met233. A Mg(2+)-binding site is contributed by Glu224.

Belongs to the cytochrome c oxidase subunit 2 family. Component of the cytochrome c oxidase (complex IV, CIV), a multisubunit enzyme composed of a catalytic core of 3 subunits and several supernumerary subunits. The complex exists as a monomer or a dimer and forms supercomplexes (SCs) in the inner mitochondrial membrane with ubiquinol-cytochrome c oxidoreductase (cytochrome b-c1 complex, complex III, CIII). Requires Cu cation as cofactor.

It is found in the mitochondrion inner membrane. The catalysed reaction is 4 Fe(II)-[cytochrome c] + O2 + 8 H(+)(in) = 4 Fe(III)-[cytochrome c] + 2 H2O + 4 H(+)(out). Component of the cytochrome c oxidase, the last enzyme in the mitochondrial electron transport chain which drives oxidative phosphorylation. The respiratory chain contains 3 multisubunit complexes succinate dehydrogenase (complex II, CII), ubiquinol-cytochrome c oxidoreductase (cytochrome b-c1 complex, complex III, CIII) and cytochrome c oxidase (complex IV, CIV), that cooperate to transfer electrons derived from NADH and succinate to molecular oxygen, creating an electrochemical gradient over the inner membrane that drives transmembrane transport and the ATP synthase. Cytochrome c oxidase is the component of the respiratory chain that catalyzes the reduction of oxygen to water. Electrons originating from reduced cytochrome c in the intermembrane space (IMS) are transferred via the dinuclear copper A center (CU(A)) of subunit 2 and heme A of subunit 1 to the active site in subunit 1, a binuclear center (BNC) formed by heme A3 and copper B (CU(B)). The BNC reduces molecular oxygen to 2 water molecules using 4 electrons from cytochrome c in the IMS and 4 protons from the mitochondrial matrix. This chain is Cytochrome c oxidase subunit 2 (COX2), found in Beta vulgaris (Sugar beet).